The chain runs to 186 residues: Large ribosomal subunit protein uL5 (186 aa).

Belongs to the universal ribosomal protein uL5 family. Part of the 50S ribosomal subunit; part of the 5S rRNA/L5/L18/L25 subcomplex. Contacts the 5S rRNA and the P site tRNA. Forms a bridge to the 30S subunit in the 70S ribosome.

In terms of biological role, this is one of the proteins that bind and probably mediate the attachment of the 5S RNA into the large ribosomal subunit, where it forms part of the central protuberance. In the 70S ribosome it contacts protein S13 of the 30S subunit (bridge B1b), connecting the 2 subunits; this bridge is implicated in subunit movement. Contacts the P site tRNA; the 5S rRNA and some of its associated proteins might help stabilize positioning of ribosome-bound tRNAs. In Cereibacter sphaeroides (strain ATCC 17029 / ATH 2.4.9) (Rhodobacter sphaeroides), this protein is Large ribosomal subunit protein uL5.